A 648-amino-acid chain; its full sequence is Biosynthetic arginine decarboxylase (648 aa).

An N6-(pyridoxal phosphate)lysine modification is found at Lys109. 291-301 (IDVGGGLGIDF) lines the substrate pocket.

This sequence belongs to the Orn/Lys/Arg decarboxylase class-II family. SpeA subfamily. Requires Mg(2+) as cofactor. Pyridoxal 5'-phosphate is required as a cofactor.

It carries out the reaction L-arginine + H(+) = agmatine + CO2. The protein operates within amine and polyamine biosynthesis; agmatine biosynthesis; agmatine from L-arginine: step 1/1. Catalyzes the biosynthesis of agmatine from arginine. The chain is Biosynthetic arginine decarboxylase from Prochlorococcus marinus (strain MIT 9215).